A 666-amino-acid polypeptide reads, in one-letter code: Polyamine deacetylase HDAC10 (666 aa).

The interval 1–323 (MGTALVYHED…VCMMVQTLLG (323 aa)) is histone deacetylase. H135 is a catalytic residue.

The protein belongs to the histone deacetylase family. HD type 2 subfamily. Interacts with HDAC3. Interacts with HDAC2 and NCOR2/SMRT. Interacts with HSPA8/HSC70. Interacts with MSH2. As to expression, widely expressed.

It is found in the cytoplasm. Its subcellular location is the nucleus. It carries out the reaction N(8)-acetylspermidine + H2O = spermidine + acetate. It catalyses the reaction N-acetylputrescine + H2O = putrescine + acetate. The catalysed reaction is N-acetylcadaverine + H2O = cadaverine + acetate. The enzyme catalyses N(6)-acetyl-L-lysyl-[protein] + H2O = L-lysyl-[protein] + acetate. In terms of biological role, polyamine deacetylase (PDAC), which acts preferentially on N(8)-acetylspermidine, and also on acetylcadaverine and acetylputrescine. Exhibits attenuated catalytic activity toward N(1),N(8)-diacetylspermidine and very low activity, if any, toward N(1)-acetylspermidine. Histone deacetylase activity has been observed in vitro. Has also been shown to be involved in MSH2 deacetylation. The physiological relevance of protein/histone deacetylase activity is unclear and could be very weak. May play a role in the promotion of late stages of autophagy, possibly autophagosome-lysosome fusion and/or lysosomal exocytosis in neuroblastoma cells. May play a role in homologous recombination. May promote DNA mismatch repair. The protein is Polyamine deacetylase HDAC10 (Hdac10) of Mus musculus (Mouse).